The chain runs to 212 residues: Imidazole glycerol phosphate synthase subunit HisH (212 aa).

The Glutamine amidotransferase type-1 domain occupies 2–212 (QTAIIDYGMG…LTMLKNFLNW (211 aa)). Residue Cys-85 is the Nucleophile of the active site. Active-site residues include His-194 and Glu-196.

Heterodimer of HisH and HisF.

The protein resides in the cytoplasm. It carries out the reaction 5-[(5-phospho-1-deoxy-D-ribulos-1-ylimino)methylamino]-1-(5-phospho-beta-D-ribosyl)imidazole-4-carboxamide + L-glutamine = D-erythro-1-(imidazol-4-yl)glycerol 3-phosphate + 5-amino-1-(5-phospho-beta-D-ribosyl)imidazole-4-carboxamide + L-glutamate + H(+). The enzyme catalyses L-glutamine + H2O = L-glutamate + NH4(+). It participates in amino-acid biosynthesis; L-histidine biosynthesis; L-histidine from 5-phospho-alpha-D-ribose 1-diphosphate: step 5/9. IGPS catalyzes the conversion of PRFAR and glutamine to IGP, AICAR and glutamate. The HisH subunit catalyzes the hydrolysis of glutamine to glutamate and ammonia as part of the synthesis of IGP and AICAR. The resulting ammonia molecule is channeled to the active site of HisF. This chain is Imidazole glycerol phosphate synthase subunit HisH (hisH), found in Neisseria meningitidis serogroup B (strain ATCC BAA-335 / MC58).